The primary structure comprises 588 residues: Adenine deaminase (588 aa).

The protein belongs to the metallo-dependent hydrolases superfamily. Adenine deaminase family. Homodimer. Requires Mn(2+) as cofactor.

It carries out the reaction adenine + H2O + H(+) = hypoxanthine + NH4(+). This Shigella sonnei (strain Ss046) protein is Adenine deaminase.